Reading from the N-terminus, the 334-residue chain is MIPTLTELLDRLHVVALPMRVRFRGITTREVALIDGPAGWGEFGAFLEYQPLEASAWLVAGIEAAYGEPPEGRRDRIPINATVPAVSATQVPEVLARFPGVRTAKVKVAEPGQNLADDVDRVNAVRELVETVRVDANGGWSVEAAAQAAVALTADGPLEYLEQPCATVAELAALRRRVDIPIAADESIRKADDPLAVVRSHAADVAVLKVAPLGGIASFLAIAAQIDIPVVVSSALDSVVGITAGLIAAAALPELDYACGLGTGRLFVADVAEPMLPVDGFLPVGPVTPDPARLQALGTPPARRQWWIDRVKTCYSLLVPCAGDQSGLRRPRDR.

K107 acts as the Proton donor in catalysis. Mg(2+) contacts are provided by D135, E162, and D185. Residue K209 is the Proton acceptor of the active site.

The protein belongs to the mandelate racemase/muconate lactonizing enzyme family. MenC type 1 subfamily. A divalent metal cation is required as a cofactor.

The enzyme catalyses (1R,6R)-6-hydroxy-2-succinyl-cyclohexa-2,4-diene-1-carboxylate = 2-succinylbenzoate + H2O. Its pathway is quinol/quinone metabolism; 1,4-dihydroxy-2-naphthoate biosynthesis; 1,4-dihydroxy-2-naphthoate from chorismate: step 4/7. The protein operates within quinol/quinone metabolism; menaquinone biosynthesis. Converts 2-succinyl-6-hydroxy-2,4-cyclohexadiene-1-carboxylate (SHCHC) to 2-succinylbenzoate (OSB). In Mycobacterium leprae (strain TN), this protein is o-succinylbenzoate synthase.